We begin with the raw amino-acid sequence, 215 residues long: Heart- and neural crest derivatives-expressed protein 1 (215 aa).

Disordered stretches follow at residues 53-109 and 166-198; these read APDF…RTES and LKKA…EKRI. Residues 65–89 are compositionally biased toward low complexity; sequence AAAAATAYGPDARPGQSPGRLEALG. Residues 92 to 104 show a composition bias toward basic residues; that stretch reads LGRRKGSGPKKER. In terms of domain architecture, bHLH spans 94-146; the sequence is RRKGSGPKKERRRTESINSAFAELRECIPNVPADTKLSKIKTLRLATSYIAYL. Thr-107 carries the post-translational modification Phosphothreonine; by PLK4. Ser-109 is subject to Phosphoserine; by PLK4.

As to quaternary structure, efficient DNA binding requires dimerization with another bHLH protein. Forms homodimers and heterodimers with TCF3 gene products E12 and E47, HAND2 and HEY1, HEY2 and HEYL (hairy-related transcription factors). Interacts with MDFIC. Interacts with SOX15; the interaction enhances HAND1-induced differentiation of trophoblast giant cells. In terms of processing, phosphorylation by PLK4 disrupts the interaction with MDFIC and leads to translocation into the nucleoplasm, allowing dimerization and transcription factor activity. Heart.

The protein localises to the nucleus. Its subcellular location is the nucleoplasm. The protein resides in the nucleolus. Functionally, transcription factor that plays an essential role in both trophoblast giant cell differentiation and in cardiac morphogenesis. Binds the DNA sequence 5'-NRTCTG-3' (non-canonical E-box). Acts as a transcriptional repressor of SOX15. In the adult, could be required for ongoing expression of cardiac-specific genes. The polypeptide is Heart- and neural crest derivatives-expressed protein 1 (HAND1) (Homo sapiens (Human)).